The following is a 546-amino-acid chain: Chaperonin GroEL 2 (546 aa).

Residues 30-33, lysine 51, 87-91, glycine 415, 479-481, and aspartate 495 contribute to the ATP site; these read TLGP, DGTTT, and NAA. Residues 524-546 form a disordered region; the sequence is APKDAPPAQPAGVPGAGGTGFDF. The span at 537 to 546 shows a compositional bias: gly residues; sequence PGAGGTGFDF.

This sequence belongs to the chaperonin (HSP60) family. As to quaternary structure, forms a cylinder of 14 subunits composed of two heptameric rings stacked back-to-back. Interacts with the co-chaperonin GroES.

The protein localises to the cytoplasm. The enzyme catalyses ATP + H2O + a folded polypeptide = ADP + phosphate + an unfolded polypeptide.. In terms of biological role, together with its co-chaperonin GroES, plays an essential role in assisting protein folding. The GroEL-GroES system forms a nano-cage that allows encapsulation of the non-native substrate proteins and provides a physical environment optimized to promote and accelerate protein folding. The chain is Chaperonin GroEL 2 from Burkholderia thailandensis (strain ATCC 700388 / DSM 13276 / CCUG 48851 / CIP 106301 / E264).